The chain runs to 314 residues: MTEPLRIVFAGTPEFAAEHLKALLDSPYQIVAVYTQPDRPAGRGQKLMPSPVKQLALQHEIPVMQPPTLRAPEAQAELAALKPDLMVVVAYGLILPQVVLDIPRLGCINSHASLLPRWRGAAPIQRAVQAGDAESGVTVMQMEAGLDTGPMLLKAVTPITAQDTGGTLHDRLAELGPPAVLQAIAGLADGSLVGEVQDDSLANYAHKLNKDEARLDWTRPADELERLIRAFNPWPICHSTLNEETLKVLAADLAEGQGVPGTVLSASKDGLIVACGQNALRLTRLQLPGGKPLNFADLFNSRREKFAIGTVLGQ.

113 to 116 serves as a coordination point for (6S)-5,6,7,8-tetrahydrofolate; that stretch reads SLLP.

Belongs to the Fmt family.

It carries out the reaction L-methionyl-tRNA(fMet) + (6R)-10-formyltetrahydrofolate = N-formyl-L-methionyl-tRNA(fMet) + (6S)-5,6,7,8-tetrahydrofolate + H(+). Functionally, attaches a formyl group to the free amino group of methionyl-tRNA(fMet). The formyl group appears to play a dual role in the initiator identity of N-formylmethionyl-tRNA by promoting its recognition by IF2 and preventing the misappropriation of this tRNA by the elongation apparatus. The chain is Methionyl-tRNA formyltransferase from Pseudomonas savastanoi pv. phaseolicola (strain 1448A / Race 6) (Pseudomonas syringae pv. phaseolicola (strain 1448A / Race 6)).